We begin with the raw amino-acid sequence, 264 residues long: ECF RNA polymerase sigma factor BldN (264 aa).

The tract at residues 1–87 (MYPHVGVDAS…PAADSDSARM (87 aa)) is not required for transcription in vitro. The segment at 64–83 (RSSSSGAAATTHRRPAADSD) is disordered. The segment at 105-172 (LYDQYSDTVY…LVADHFKSSR (68 aa)) is sigma-70 factor domain-2. The Polymerase core binding motif lies at 129–132 (DLTS). The sigma-70 factor domain-4 stretch occupies residues 204 to 255 (ALLDAVRRLNPQQQECVTLRFLQGLSVAETARVMGKNEGAIKTLQYRAVRTL).

The protein belongs to the sigma-70 factor family. ECF subfamily. In terms of processing, two forms of protein exist; a 35 kDa form in early growth and a 28 kDa form seen in later stages (at protein level). In liquid culture the larger form accumulates to higher level than on solid media. The shorter form results from processing just upstream of Met-87; the exact position is unknown. There are 4 possible start codons; mutation of the first prevents protein production while mutation of the other 3 (Val-44, Met-87 and Met-88) permits production of both forms. Introduction of stop codons between the first and second, or second and third possible start codons also prevents protein production, corroborating that the annotated start codon is the correct one.

Sigma factors are initiation factors that promote the attachment of RNA polymerase to specific initiation sites and are then released. Extracytoplasmic function (ECF) sigma factors are usually held in an inactive form by an anti-sigma factor until released. ECF sigma factor involved in aerial mycelium formation, required for translation from the bldMp1 promoter. Expressed as a preprotein; processing and accumulation of the mature protein starts as aerial mycelium formation and sporulation commence. Activates expression of about 17 genes, including those for rdlA and most of the chaplins (chpA to chpH); chaplin activation is indirect. The protein is ECF RNA polymerase sigma factor BldN of Streptomyces coelicolor (strain ATCC BAA-471 / A3(2) / M145).